The primary structure comprises 509 residues: Leucine-rich repeat-containing protein 14 (509 aa).

One copy of the LRR 1; degenerate repeat lies at 111 to 146 (RQRLRLLDMTGMQEEGLEQNPDTMSLWSRTVTLAKA). Residues 210 to 234 (RLQCRDFRAEELSLRSTAGLLELLN) form an LRR 2; degenerate repeat. The LRR 3; degenerate repeat unit spans residues 235–262 (PGSVRQIDLRFNNLGLSGLNVLLPHMAK). An LRR 4; degenerate repeat occupies 263–298 (FSHLQSLKLPYSNVDVRRLSPVMEEGLQSFASQLGQ). 5 LRR repeats span residues 299–323 (LGALKELNLGSSRLSGRLRQLLGGL), 324–355 (QRPLESLELAFCSLLPMDLSYLSQSSHMSSLR), 356–374 (KLDLSGNNLSEFLLTPFLH), 380–407 (SGHLLYLDVMECKLADAHLSALMPILCR), and 408–432 (CSWLRYLGLFCNPISSDGLRMVLQN).

Belongs to the PRAME family. LRRC14 subfamily.

It is found in the cytoplasm. In Xenopus laevis (African clawed frog), this protein is Leucine-rich repeat-containing protein 14.